We begin with the raw amino-acid sequence, 247 residues long: Homeobox-leucine zipper protein HOX17 (247 aa).

A disordered region spans residues 58–81; the sequence is ERAGLRGGGGSDEEDGGCGIDGSR. Positions 79–138 form a DNA-binding region, homeobox; that stretch reads GSRKKLRLSKDQSAVLEDSFREHPTLNPRQKATLAQQLGLRPRQVEVWFQNRRARTKLKQ. A leucine-zipper region spans residues 137-182; it reads KQTEVDCEFLKRCCETLTEENRRLQKEVQELRALKLVSPHLYMNMS.

Belongs to the HD-ZIP homeobox family. Class II subfamily. Expressed in seedlings, roots, stems, leaf sheaths and blades and panicles.

The protein localises to the nucleus. Functionally, probable transcription factor. The chain is Homeobox-leucine zipper protein HOX17 (HOX17) from Oryza sativa subsp. japonica (Rice).